The primary structure comprises 308 residues: Transaldolase (308 aa).

Lys-125 serves as the catalytic Schiff-base intermediate with substrate.

This sequence belongs to the transaldolase family. Type 1 subfamily. In terms of assembly, homodimer.

Its subcellular location is the cytoplasm. The enzyme catalyses D-sedoheptulose 7-phosphate + D-glyceraldehyde 3-phosphate = D-erythrose 4-phosphate + beta-D-fructose 6-phosphate. It participates in carbohydrate degradation; pentose phosphate pathway; D-glyceraldehyde 3-phosphate and beta-D-fructose 6-phosphate from D-ribose 5-phosphate and D-xylulose 5-phosphate (non-oxidative stage): step 2/3. In terms of biological role, transaldolase is important for the balance of metabolites in the pentose-phosphate pathway. The chain is Transaldolase from Pseudomonas putida (strain W619).